Consider the following 101-residue polypeptide: Large ribosomal subunit protein uL24 (101 aa).

It belongs to the universal ribosomal protein uL24 family. In terms of assembly, part of the 50S ribosomal subunit.

One of two assembly initiator proteins, it binds directly to the 5'-end of the 23S rRNA, where it nucleates assembly of the 50S subunit. In terms of biological role, one of the proteins that surrounds the polypeptide exit tunnel on the outside of the subunit. The chain is Large ribosomal subunit protein uL24 from Thermobifida fusca (strain YX).